Here is a 291-residue protein sequence, read N- to C-terminus: B-lymphocyte antigen CD20 (291 aa).

Topologically, residues 1–44 (MSGPFPAEPTKGPLAMQPAPKVNLKRTSSLVGPTQSFFMRESKA) are cytoplasmic. Ser29 is subject to Phosphoserine. The chain crosses the membrane as a helical span at residues 45–65 (LGAVQIMNGLFHITLGGLLMI). At 66 to 68 (PTG) the chain is on the extracellular side. Residues 69-89 (VFAPICLSVWYPLWGGIMYII) traverse the membrane as a helical segment. The Cytoplasmic portion of the chain corresponds to 90–111 (SGSLLAAAAEKTSRKSLVKAKV). A helical transmembrane segment spans residues 112–132 (IMSSLSLFAAISGIILSIMDI). The Extracellular portion of the chain corresponds to 133 to 182 (LNMTLSHFLKMRRLELIQTSKPYVDIYDCEPSNSSEKNSPSTQYCNSIQS). Residues 183–203 (VFLGILSAMLISAFFQKLVTA) form a helical membrane-spanning segment. Topologically, residues 204 to 291 (GIVENEWKRM…SLPVENEIAP (88 aa)) are cytoplasmic. Cys214 carries S-palmitoyl cysteine lipidation. Ser219 carries the phosphoserine modification. Position 233 is a phosphothreonine (Thr233). Acidic residues predominate over residues 261–270 (VQEEEEEEAE). Residues 261-291 (VQEEEEEEAEINFPAPPQEQESLPVENEIAP) are disordered.

The protein belongs to the MS4A family. Forms homotetramers. Interacts with the heavy and light chains of cell surface IgM, the antigen-binding components of the BCR. Phosphorylated.

Its subcellular location is the cell membrane. Functionally, B-lymphocyte-specific membrane protein that plays a role in the regulation of cellular calcium influx necessary for the development, differentiation, and activation of B-lymphocytes. Functions as a store-operated calcium (SOC) channel component promoting calcium influx after activation by the B-cell receptor/BCR. The chain is B-lymphocyte antigen CD20 (Ms4a1) from Mus musculus (Mouse).